A 230-amino-acid polypeptide reads, in one-letter code: MAHPSQLGFQDAASPVMEELLHFHDHALMIVLLISTLVLYIIVAMVSTKLTNKYILDSQEIEIVWTVLPAVILILIALPSLRILYLMDEINDPHLTIKAMGHQWYWSYEYTDYEDLGFDSYMVPTQDLTPGQFRLLETDHRMVVPVESPIRVLVSAEDVLHSWAVPSLGVKMDASPGRLNQTAFIASRPGVFYGQCSEICGANHSFMPIVVEAVPLEHFEKWSTMMLEDA.

Residues 1-14 (MAHPSQLGFQDAAS) lie on the Mitochondrial intermembrane side of the membrane. Residues 15-45 (PVMEELLHFHDHALMIVLLISTLVLYIIVAM) form a helical membrane-spanning segment. Over 46–59 (VSTKLTNKYILDSQ) the chain is Mitochondrial matrix. The helical transmembrane segment at 60–87 (EIEIVWTVLPAVILILIALPSLRILYLM) threads the bilayer. The Mitochondrial intermembrane portion of the chain corresponds to 88–230 (DEINDPHLTI…KWSTMMLEDA (143 aa)). Residues histidine 161, cysteine 196, glutamate 198, cysteine 200, histidine 204, and methionine 207 each coordinate Cu cation. Glutamate 198 is a binding site for Mg(2+).

This sequence belongs to the cytochrome c oxidase subunit 2 family. Component of the cytochrome c oxidase (complex IV, CIV), a multisubunit enzyme composed of 14 subunits. The complex is composed of a catalytic core of 3 subunits MT-CO1, MT-CO2 and MT-CO3, encoded in the mitochondrial DNA, and 11 supernumerary subunits COX4I, COX5A, COX5B, COX6A, COX6B, COX6C, COX7A, COX7B, COX7C, COX8 and NDUFA4, which are encoded in the nuclear genome. The complex exists as a monomer or a dimer and forms supercomplexes (SCs) in the inner mitochondrial membrane with NADH-ubiquinone oxidoreductase (complex I, CI) and ubiquinol-cytochrome c oxidoreductase (cytochrome b-c1 complex, complex III, CIII), resulting in different assemblies (supercomplex SCI(1)III(2)IV(1) and megacomplex MCI(2)III(2)IV(2)). Found in a complex with TMEM177, COA6, COX18, COX20, SCO1 and SCO2. Interacts with TMEM177 in a COX20-dependent manner. Interacts with COX20. Interacts with COX16. Requires Cu cation as cofactor.

It localises to the mitochondrion inner membrane. It catalyses the reaction 4 Fe(II)-[cytochrome c] + O2 + 8 H(+)(in) = 4 Fe(III)-[cytochrome c] + 2 H2O + 4 H(+)(out). Component of the cytochrome c oxidase, the last enzyme in the mitochondrial electron transport chain which drives oxidative phosphorylation. The respiratory chain contains 3 multisubunit complexes succinate dehydrogenase (complex II, CII), ubiquinol-cytochrome c oxidoreductase (cytochrome b-c1 complex, complex III, CIII) and cytochrome c oxidase (complex IV, CIV), that cooperate to transfer electrons derived from NADH and succinate to molecular oxygen, creating an electrochemical gradient over the inner membrane that drives transmembrane transport and the ATP synthase. Cytochrome c oxidase is the component of the respiratory chain that catalyzes the reduction of oxygen to water. Electrons originating from reduced cytochrome c in the intermembrane space (IMS) are transferred via the dinuclear copper A center (CU(A)) of subunit 2 and heme A of subunit 1 to the active site in subunit 1, a binuclear center (BNC) formed by heme A3 and copper B (CU(B)). The BNC reduces molecular oxygen to 2 water molecules using 4 electrons from cytochrome c in the IMS and 4 protons from the mitochondrial matrix. The polypeptide is Cytochrome c oxidase subunit 2 (mt-co2) (Salmo salar (Atlantic salmon)).